The chain runs to 231 residues: Chalcone--flavanone isomerase (231 aa).

Substrate contacts are provided by T46, N111, and S188.

This sequence belongs to the chalcone isomerase family. In terms of tissue distribution, pericarp.

It carries out the reaction a chalcone = a flavanone.. Its pathway is secondary metabolite biosynthesis; flavonoid biosynthesis. Functionally, catalyzes the intramolecular cyclization of bicyclic chalcones into tricyclic (S)-flavanones. Responsible for the isomerization of 4,2',4',6'-tetrahydroxychalcone (also termed chalcone) into naringenin. In Zea mays (Maize), this protein is Chalcone--flavanone isomerase (CHI).